Here is a 451-residue protein sequence, read N- to C-terminus: Cyclin-dependent kinase 18 (451 aa).

Phosphoserine occurs at positions 12, 51, 66, 75, and 109. One can recognise a Protein kinase domain in the interval 121–402; sequence YVKLDKLGEG…AEAALNHPYF (282 aa). ATP is bound by residues 127–135 and Lys-150; that span reads LGEGTYATV. Residue Asp-242 is the Proton acceptor of the active site. A phosphoserine mark is found at Ser-417 and Ser-420.

This sequence belongs to the protein kinase superfamily. CMGC Ser/Thr protein kinase family. CDC2/CDKX subfamily. In terms of tissue distribution, in brain, kidney, intestine and at a much lower level, in fetal tissues.

It carries out the reaction L-seryl-[protein] + ATP = O-phospho-L-seryl-[protein] + ADP + H(+). The catalysed reaction is L-threonyl-[protein] + ATP = O-phospho-L-threonyl-[protein] + ADP + H(+). May play a role in signal transduction cascades in terminally differentiated cells. The chain is Cyclin-dependent kinase 18 (Cdk18) from Mus musculus (Mouse).